Here is a 567-residue protein sequence, read N- to C-terminus: Urease subunit alpha (567 aa).

Residues 129–567 (GGIDTHIHWI…LPMAQRYFLF (439 aa)) form the Urease domain. The Ni(2+) site is built by His134, His136, and Lys217. Lys217 is subject to N6-carboxylysine. His219 provides a ligand contact to substrate. His246 and His272 together coordinate Ni(2+). His320 acts as the Proton donor in catalysis. Asp360 lines the Ni(2+) pocket.

Belongs to the metallo-dependent hydrolases superfamily. Urease alpha subunit family. In terms of assembly, heterotrimer of UreA (gamma), UreB (beta) and UreC (alpha) subunits. Three heterotrimers associate to form the active enzyme. The apoenzyme interacts with an accessory complex composed of UreD, UreF and UreG, which is required for the assembly of the nickel containing metallocenter of UreC. The UreE protein may also play a direct role as a metallochaperone in nickel transfer to the urease apoprotein. Ni cation is required as a cofactor. In terms of processing, carboxylation allows a single lysine to coordinate two nickel ions.

It is found in the cytoplasm. The catalysed reaction is urea + 2 H2O + H(+) = hydrogencarbonate + 2 NH4(+). It participates in nitrogen metabolism; urea degradation; CO(2) and NH(3) from urea (urease route): step 1/1. The apoenzyme can be activated in vitro in the presence of nickel ions and carbon dioxide, which promotes carboxylation of Lys-217. The chain is Urease subunit alpha from Klebsiella aerogenes (Enterobacter aerogenes).